Consider the following 280-residue polypeptide: MKYIGAHVSAAGGVDRAVERASELEATAFALFTKNQRQWHAAPLTDEVISAFRLACEKHRYTPAQILPHDSYLINLGHPVAEALEKSRDAFLDEMNRCQQLGLTLLNFHPGSHLQQITEDECLKRIAESINIVLNNTAGVTAVIENTAGQGSNLGFRFEHLAAIIDGVEDKSRVGVCIDTCHAFAGGYDLRSEEACVNTFAEFERIVGFQYLRGMHLNDAKSEFNSRVDRHHSLGEGNIGKAAFSWLMKDKRFDGIPMILETIDPEIWKDEIAWLKSEQK.

Zn(2+)-binding residues include histidine 69, histidine 109, glutamate 145, aspartate 179, histidine 182, histidine 216, aspartate 229, histidine 231, and glutamate 261.

Belongs to the AP endonuclease 2 family. Zn(2+) is required as a cofactor.

It carries out the reaction Endonucleolytic cleavage to 5'-phosphooligonucleotide end-products.. Functionally, endonuclease IV plays a role in DNA repair. It cleaves phosphodiester bonds at apurinic or apyrimidinic (AP) sites, generating a 3'-hydroxyl group and a 5'-terminal sugar phosphate. This Erwinia tasmaniensis (strain DSM 17950 / CFBP 7177 / CIP 109463 / NCPPB 4357 / Et1/99) protein is Probable endonuclease 4.